The primary structure comprises 325 residues: Deoxyhypusine hydroxylase (325 aa).

S2 is subject to N-acetylserine. HEAT-like PBS-type repeat units lie at residues L77 to D103 and V110 to E136. Positions 79, 80, 112, and 113 each coordinate Fe cation. S126 bears the Phosphoserine mark. T187 is subject to Phosphothreonine. 3 HEAT-like PBS-type repeats span residues L202–E231, F235–R261, and V268–D294. Fe cation contacts are provided by H237, E238, H270, and E271. S281 is subject to Phosphoserine.

The protein belongs to the deoxyhypusine hydroxylase family. Requires Fe(2+) as cofactor.

Its subcellular location is the cytoplasm. The protein resides in the nucleus. The enzyme catalyses [eIF5A protein]-deoxyhypusine + AH2 + O2 = [eIF5A protein]-hypusine + A + H2O. The protein operates within protein modification; eIF5A hypusination. Functionally, catalyzes the hydroxylation of the N(6)-(4-aminobutyl)-L-lysine intermediate to form hypusine, an essential post-translational modification only found in mature eIF-5A factor. The sequence is that of Deoxyhypusine hydroxylase from Saccharomyces cerevisiae (strain ATCC 204508 / S288c) (Baker's yeast).